The sequence spans 582 residues: RVSIYSARRPLLARTHIQGRVYNFLERPTGWKCFVYHFAVFLIVLVCLIFSVLSTIEQYVALATGTLFWMEIVLVVFFGTEYVVRLWSAGCRSKYVGVWGRLRFARKPISIIDLIVVLASMVVLCVGSKGQVFATSAIRGIRFLQILRMLHVDRQGGTWRLLGSVVFIHRQELITTLYIGFLGLIFSSYFVYLAEKDAVNESGQVEFGSYADALWWGVVTVTTIGYGDKVPQTWVGKTIASCFSVFAISFFALPAGILGSGFALKVQQKQRQKHFNRQIPAAASLIQTAWRCYAAENPESSTWNIYVRKPTRSHTLLSPSPKPKKSVMVKKKKFKLDKDNGVSPGEKTLTVPHITCEPVSEKRRPDHFSVDTCDSSVKSPMLLEVSTTHFLRTNSVAEDLDLEGETPLVPITHVSQLREHHRATIKVIRRMQYFVAKKKFQQARKPYDVRDVIEQYSQGHLNLMVRIKELQRRLDQSIGKPSLFISVSEKSKDRGSNTIGARLNRVEDKVAQLDQRLVLITDMLQQLLSLHHGGPPGSRPPSGGGAQVQPCGPTNPELFLPGNALPTYEQLTVPRRGPEEGS.

The Cytoplasmic segment spans residues 1 to 31 (RVSIYSARRPLLARTHIQGRVYNFLERPTGW). The helical transmembrane segment at 32-53 (KCFVYHFAVFLIVLVCLIFSVL) threads the bilayer. The Extracellular segment spans residues 54–64 (STIEQYVALAT). Residues 65 to 87 (GTLFWMEIVLVVFFGTEYVVRLW) form a helical membrane-spanning segment. At 88–103 (SAGCRSKYVGVWGRLR) the chain is on the cytoplasmic side. A helical transmembrane segment spans residues 104–129 (FARKPISIIDLIVVLASMVVLCVGSK). At 130 to 137 (GQVFATSA) the chain is on the extracellular side. The chain crosses the membrane as a helical; Voltage-sensor span at residues 138–153 (IRGIRFLQILRMLHVD). Positions 149–157 (MLHVDRQGG) are interaction with KCNE3. The Cytoplasmic portion of the chain corresponds to 154 to 171 (RQGGTWRLLGSVVFIHRQ). A 1,2-diacyl-sn-glycero-3-phospho-(1D-myo-inositol-4,5-bisphosphate) is bound at residue glutamine 155. Residues 172-194 (ELITTLYIGFLGLIFSSYFVYLA) traverse the membrane as a helical segment. The Extracellular portion of the chain corresponds to 195 to 210 (EKDAVNESGQVEFGSY). An N-linked (GlcNAc...) asparagine glycan is attached at asparagine 200. The pore-forming intramembrane region spans 211 to 231 (ADALWWGVVTVTTIGYGDKVP). Topologically, residues 232–233 (QT) are extracellular. A helical transmembrane segment spans residues 234-259 (WVGKTIASCFSVFAISFFALPAGILG). The Cytoplasmic segment spans residues 260–582 (SGFALKVQQK…VPRRGPEEGS (323 aa)). An interaction with CALM region spans residues 281 to 293 (AAASLIQTAWRCY). Residues serine 318 and serine 320 each carry the phosphoserine modification. The interaction with CALM; calcium-dependent stretch occupies residues 426 to 440 (KVIRRMQYFVAKKKF). The segment at 446–483 (PYDVRDVIEQYSQGHLNLMVRIKELQRRLDQSIGKPSL) is interaction with KCNE1 C-terminus. Positions 496-532 (SNTIGARLNRVEDKVAQLDQRLVLITDMLQQLLSLHH) form a coiled coil. The tract at residues 499–527 (IGARLNRVEDKVAQLDQRLVLITDMLQQL) is interaction with AKAP9. Residues 500 to 531 (GARLNRVEDKVAQLDQRLVLITDMLQQLLSLH) form a C-terminal assembly domain (tetramerization) region. Residues 530-582 (LHHGGPPGSRPPSGGGAQVQPCGPTNPELFLPGNALPTYEQLTVPRRGPEEGS) form a disordered region.

It belongs to the potassium channel family. KQT (TC 1.A.1.15) subfamily. Kv7.1/KCNQ1 sub-subfamily. As to quaternary structure, tetramer. Heterotetramer with KCNE1; targets to the membrane raft. Interacts (via C-terminus) with CALM; forms a heterooctameric structure (with 4:4 KCNQ1:CALM stoichiometry) in a calcium-independent manner. Interacts with AKAP9; targets protein kinase A (PKA) catalytic and regulatory subunits and protein phosphatase 1 (PP1) to the KCNQ1-KCNE1 complex, allowing PKA-mediated phosphorylation and increase of delayed rectifier potassium channel activity. Interacts with KCNE2; form a heterooligomer complex that targets to the membrane raft and leading to currents with an apparently instantaneous activation, a rapid deactivation process and a linear current-voltage relationship and decreases the amplitude of the outward current. Interacts with AP2M1; mediates estrogen-induced internalization via clathrin-coated vesicles. Interacts with NEDD4L; promotes internalization and decreases I(Ks) currents. Interacts with USP2; counteracts the NEDD4L-specific down-regulation of I(Ks) and restore plasma membrane localization. Heterotetramer with KCNQ5; has a voltage-gated potassium channel activity. Interacts with KCNE3; four KCNE3 molecules are bound to one KCNQ1 tetramer (4:4 KCNQ1:KCNE3 stoichiometry); alters membrane raft localization; affects KCNQ1 structure and gating properties. Interacts with KCNE4; impairs KCNQ1 localization in lipid rafts and inhibits voltage-gated potassium channel activity. Interacts with KCNE5; impairs KCNQ1 localization in lipid rafts and only conducts current upon strong and continued depolarization. In terms of processing, phosphorylated by PKA; increases delayed rectifier potassium channel activity of the KCNQ1-KCNE1 complex through a macromolecular complex that includes PKA, PP1, and the targeting protein AKAP9. Ubiquitinated by NEDD4L; promotes internalization. The ubiquitinylated form is internalized through a clathrin-mediated endocytosis by interacting with AP2M1 and is recycled back to the cell membrane via RAB4A and RAB11A. Post-translationally, deubiquitinated by USP2; counteracts the NEDD4L-specific down-regulation of I(Ks) and restores the membrane localization.

The protein resides in the cell membrane. It is found in the cytoplasmic vesicle membrane. Its subcellular location is the early endosome. The protein localises to the membrane raft. It localises to the endoplasmic reticulum. The protein resides in the basolateral cell membrane. The enzyme catalyses K(+)(in) = K(+)(out). With respect to regulation, PIP2 molecule is essential to activate KCNQ channels by inducing the coupling of the voltage-sensing domain (VSD) and the pore-forming domain (PD). Upon channel activation, PIP2 disrupts the VSD-calmodulin/CALM interactions, causing the release of CALM from the VSD which triggers the opening of the gate. Calcium potentiates KCNQ1 channel current through calcium-bound CALM. Calcium-bound CALM competes with PIP2 to stabilize the channel open state. Functionally, pore-forming subunit of the voltage-gated potassium (Kv) channel involved in the regulation of cardiomyocyte excitability and important in normal development and functions of myocardium, inner ear, stomach and colon. Associates with KCNE beta subunits that modulates current kinetics. Induces a voltage-dependent by rapidly activating and slowly deactivating potassium-selective outward current. Also promotes a delayed voltage activated potassium current showing outward rectification characteristic. During beta-adrenergic receptor stimulation participates in cardiac repolarization by associating with KCNE1 to form the I(Ks) cardiac potassium current that increases the amplitude and slows down the activation kinetics of outward potassium current I(Ks). Muscarinic agonist oxotremorine-M strongly suppresses KCNQ1/KCNE1 current. When associated with KCNE3, forms the potassium channel that is important for cyclic AMP-stimulated intestinal secretion of chloride ions. This interaction with KCNE3 is reduced by 17beta-estradiol, resulting in the reduction of currents. During conditions of increased substrate load, maintains the driving force for proximal tubular and intestinal sodium ions absorption, gastric acid secretion, and cAMP-induced jejunal chloride ions secretion. Allows the provision of potassium ions to the luminal membrane of the secretory canaliculus in the resting state as well as during stimulated acid secretion. When associated with KCNE2, forms a heterooligomer complex leading to currents with an apparently instantaneous activation, a rapid deactivation process and a linear current-voltage relationship and decreases the amplitude of the outward current. When associated with KCNE4, inhibits voltage-gated potassium channel activity. When associated with KCNE5, this complex only conducts current upon strong and continued depolarization. Also forms a heterotetramer with KCNQ5 that has a voltage-gated potassium channel activity. Binds with phosphatidylinositol 4,5-bisphosphate. This Felis catus (Cat) protein is Potassium voltage-gated channel subfamily KQT member 1.